The following is a 276-amino-acid chain: MSARWTTAVLDPQITGGLAVARSPDGFLVDANGALFPRDWLKRQDLDVLCEHGIGHFDGQPVFLLELRSATDVPGCSWRGLRAFMLEGDFDTYKVLGYAAQIGTWAREHRFCGSCGQAMTQIRWERAMYCQPCDLRSYPRISPSMIVLVTRGDEILLARSPRFVTGVYSTLAGFAEPGESAEDCLVREVREEVAVEVQNIQYVGSQCWPFPHSMMLGFHAEYAGGDIVMQPDEIEDAQWFSVHDLPPLPAGRSIARYLIDLYVARRLGLPEPVLPR.

Arg-82 contributes to the substrate binding site. Residues Cys-112 and Cys-115 each contribute to the Zn(2+) site. Glu-125 serves as a coordination point for substrate. Residues Cys-130 and Cys-133 each contribute to the Zn(2+) site. Tyr-138 is a substrate binding site. One can recognise a Nudix hydrolase domain in the interval 139-262 (PRISPSMIVL…SIARYLIDLY (124 aa)). Residues Ala-172, Glu-188, and Glu-192 each coordinate a divalent metal cation. The short motif at 173-194 (GFAEPGESAEDCLVREVREEVA) is the Nudix box element. Residue 206-213 (QCWPFPHS) participates in substrate binding. Residue Glu-233 coordinates a divalent metal cation. Residue Ala-255 coordinates substrate.

It belongs to the Nudix hydrolase family. NudC subfamily. Homodimer. The cofactor is Mg(2+). Mn(2+) serves as cofactor. Zn(2+) is required as a cofactor.

The catalysed reaction is a 5'-end NAD(+)-phospho-ribonucleoside in mRNA + H2O = a 5'-end phospho-adenosine-phospho-ribonucleoside in mRNA + beta-nicotinamide D-ribonucleotide + 2 H(+). It carries out the reaction NAD(+) + H2O = beta-nicotinamide D-ribonucleotide + AMP + 2 H(+). The enzyme catalyses NADH + H2O = reduced beta-nicotinamide D-ribonucleotide + AMP + 2 H(+). Functionally, mRNA decapping enzyme that specifically removes the nicotinamide adenine dinucleotide (NAD) cap from a subset of mRNAs by hydrolyzing the diphosphate linkage to produce nicotinamide mononucleotide (NMN) and 5' monophosphate mRNA. The NAD-cap is present at the 5'-end of some mRNAs and stabilizes RNA against 5'-processing. Has preference for mRNAs with a 5'-end purine. Catalyzes the hydrolysis of a broad range of dinucleotide pyrophosphates. This chain is NAD-capped RNA hydrolase NudC, found in Pseudomonas putida (strain GB-1).